The sequence spans 101 residues: NADH-quinone oxidoreductase subunit K (101 aa).

3 helical membrane-spanning segments follow: residues 4 to 24 (VYDYLVLGVILFGLSLVGIML), 29 to 49 (IILLLVCVELMLLAVNTNFIA), and 61 to 81 (VFVFFILTVAAAEAAIGLAIV).

The protein belongs to the complex I subunit 4L family. NDH-1 is composed of 14 different subunits. Subunits NuoA, H, J, K, L, M, N constitute the membrane sector of the complex.

The protein localises to the cell inner membrane. It carries out the reaction a quinone + NADH + 5 H(+)(in) = a quinol + NAD(+) + 4 H(+)(out). Functionally, NDH-1 shuttles electrons from NADH, via FMN and iron-sulfur (Fe-S) centers, to quinones in the respiratory chain. The immediate electron acceptor for the enzyme in this species is believed to be ubiquinone. Couples the redox reaction to proton translocation (for every two electrons transferred, four hydrogen ions are translocated across the cytoplasmic membrane), and thus conserves the redox energy in a proton gradient. This is NADH-quinone oxidoreductase subunit K from Legionella pneumophila (strain Paris).